The chain runs to 273 residues: Pyrroline-5-carboxylate reductase (273 aa).

This sequence belongs to the pyrroline-5-carboxylate reductase family.

The protein resides in the cytoplasm. It catalyses the reaction L-proline + NADP(+) = (S)-1-pyrroline-5-carboxylate + NADPH + 2 H(+). The catalysed reaction is L-proline + NAD(+) = (S)-1-pyrroline-5-carboxylate + NADH + 2 H(+). It functions in the pathway amino-acid biosynthesis; L-proline biosynthesis; L-proline from L-glutamate 5-semialdehyde: step 1/1. In terms of biological role, catalyzes the reduction of 1-pyrroline-5-carboxylate (PCA) to L-proline. The chain is Pyrroline-5-carboxylate reductase from Pseudomonas aeruginosa (strain ATCC 15692 / DSM 22644 / CIP 104116 / JCM 14847 / LMG 12228 / 1C / PRS 101 / PAO1).